The chain runs to 652 residues: Oligopeptide-binding protein AliB (652 aa).

The signal sequence occupies residues 1 to 24; that stretch reads MKKSKSKYLTLAGLVLGTGVLLSA. A lipid anchor (N-palmitoyl cysteine) is attached at C25. The S-diacylglycerol cysteine moiety is linked to residue C25.

It belongs to the bacterial solute-binding protein 5 family.

The protein resides in the cell membrane. Part of the binding-protein-dependent transport system for oligopeptides; probably an oligopeptide binding protein. The chain is Oligopeptide-binding protein AliB (aliB) from Streptococcus pneumoniae serotype 4 (strain ATCC BAA-334 / TIGR4).